We begin with the raw amino-acid sequence, 376 residues long: Cobalt-precorrin-5B C(1)-methyltransferase (376 aa).

The segment at 353-376 is disordered; that stretch reads KGRTTSTPSHQPAPSSFGDRNRRT. Residues 355 to 366 are compositionally biased toward polar residues; that stretch reads RTTSTPSHQPAP.

It belongs to the CbiD family.

It carries out the reaction Co-precorrin-5B + S-adenosyl-L-methionine = Co-precorrin-6A + S-adenosyl-L-homocysteine. The protein operates within cofactor biosynthesis; adenosylcobalamin biosynthesis; cob(II)yrinate a,c-diamide from sirohydrochlorin (anaerobic route): step 6/10. Functionally, catalyzes the methylation of C-1 in cobalt-precorrin-5B to form cobalt-precorrin-6A. In Agrobacterium fabrum (strain C58 / ATCC 33970) (Agrobacterium tumefaciens (strain C58)), this protein is Cobalt-precorrin-5B C(1)-methyltransferase.